The sequence spans 445 residues: Cyclic GMP-AMP synthase-like receptor 1 (445 aa).

Mg(2+) is bound by residues Glu70, Asp72, and Asp186. An ATP-binding site is contributed by 70–72 (EYD). GTP contacts are provided by residues Asp186 and 232–239 (RTSFYEAE). Residues 236 to 239 (YEAE), Lys257, and 270 to 274 (SYHIK) each bind ATP. Positions 357 to 445 (LNDDNENSVH…KSKTTTPKPS (89 aa)) are disordered. Positions 377–398 (QKMEKTSTESEQKKPTETKPNA) are enriched in basic and acidic residues. Low complexity predominate over residues 435-445 (TKSKTTTPKPS).

It belongs to the mab-21 family. Mg(2+) is required as a cofactor. The cofactor is Mn(2+).

The catalysed reaction is GTP + ATP = 3',2'-cGAMP + 2 diphosphate. It carries out the reaction GTP + ATP = pppA(2'-5')pG + diphosphate. The enzyme catalyses pppA(2'-5')pG = 3',2'-cGAMP + diphosphate. Its activity is regulated as follows. The enzyme activity is specifically activated by double-stranded RNA (dsRNA). In terms of biological role, nucleotidyltransferase that catalyzes the formation of cyclic GMP-AMP (3',2'-cGAMP) from ATP and GTP and plays a key role in innate immunity. Synthesizes 3',2'-cGAMP in a two-step reaction through production of the linear intermediate pppA(2'-5')pG. Acts as a key sensor of double-stranded RNA (dsRNA), the presence of dsRNA in the cytoplasm being a danger signal that triggers the immune responses. Directly binds dsRNA, activating the nucleotidyltransferase activity, leading to synthesis of 3',2'-cGAMP, a second messenger that binds to and activates Sting, thereby triggering the antiviral immune response via activation of the NF-kappa-B transcription factor Rel (Relish). This chain is Cyclic GMP-AMP synthase-like receptor 1, found in Drosophila erecta (Fruit fly).